The primary structure comprises 273 residues: Bifunctional protein FolD (273 aa).

NADP(+)-binding positions include 155 to 157 (GRS), Ser-182, and Ile-223.

This sequence belongs to the tetrahydrofolate dehydrogenase/cyclohydrolase family. Homodimer.

The catalysed reaction is (6R)-5,10-methylene-5,6,7,8-tetrahydrofolate + NADP(+) = (6R)-5,10-methenyltetrahydrofolate + NADPH. The enzyme catalyses (6R)-5,10-methenyltetrahydrofolate + H2O = (6R)-10-formyltetrahydrofolate + H(+). It functions in the pathway one-carbon metabolism; tetrahydrofolate interconversion. In terms of biological role, catalyzes the oxidation of 5,10-methylenetetrahydrofolate to 5,10-methenyltetrahydrofolate and then the hydrolysis of 5,10-methenyltetrahydrofolate to 10-formyltetrahydrofolate. In Pseudothermotoga lettingae (strain ATCC BAA-301 / DSM 14385 / NBRC 107922 / TMO) (Thermotoga lettingae), this protein is Bifunctional protein FolD.